We begin with the raw amino-acid sequence, 379 residues long: Cyclic di-GMP phosphodiesterase PdeB (379 aa).

Residues 114 to 310 enclose the HD-GYP domain; that stretch reads FYKKQKKIFI…PLDFIVELND (197 aa).

Mn(2+) serves as cofactor.

The catalysed reaction is 3',3'-c-di-GMP + 2 H2O = 2 GMP + 2 H(+). Functionally, phosphodiesterase (PDE) that catalyzes the hydrolysis of cyclic diguanylate (c-di-GMP) to GMP. This Borreliella burgdorferi (strain ATCC 35210 / DSM 4680 / CIP 102532 / B31) (Borrelia burgdorferi) protein is Cyclic di-GMP phosphodiesterase PdeB.